Here is a 213-residue protein sequence, read N- to C-terminus: ATP phosphoribosyltransferase (213 aa).

This sequence belongs to the ATP phosphoribosyltransferase family. Short subfamily. In terms of assembly, heteromultimer composed of HisG and HisZ subunits.

It localises to the cytoplasm. It catalyses the reaction 1-(5-phospho-beta-D-ribosyl)-ATP + diphosphate = 5-phospho-alpha-D-ribose 1-diphosphate + ATP. It functions in the pathway amino-acid biosynthesis; L-histidine biosynthesis; L-histidine from 5-phospho-alpha-D-ribose 1-diphosphate: step 1/9. Its function is as follows. Catalyzes the condensation of ATP and 5-phosphoribose 1-diphosphate to form N'-(5'-phosphoribosyl)-ATP (PR-ATP). Has a crucial role in the pathway because the rate of histidine biosynthesis seems to be controlled primarily by regulation of HisG enzymatic activity. The polypeptide is ATP phosphoribosyltransferase (Methylococcus capsulatus (strain ATCC 33009 / NCIMB 11132 / Bath)).